The sequence spans 90 residues: uncharacterized protein (90 aa).

This is an uncharacterized protein from Mycoplasma genitalium (strain ATCC 33530 / DSM 19775 / NCTC 10195 / G37) (Mycoplasmoides genitalium).